Here is a 531-residue protein sequence, read N- to C-terminus: Ultra-long-chain fatty acid omega-hydroxylase (531 aa).

Topologically, residues 1–22 (MLPITDRLLHLLGLEKTAFRIY) are lumenal. A helical membrane pass occupies residues 23-43 (AVSTLLLFLLFFLFRLLLRFL). The Cytoplasmic portion of the chain corresponds to 44 to 531 (RLCRSFYITC…LKVEPLPPRA (488 aa)). 2 residues coordinate heme: Glu335 and Cys475.

The protein belongs to the cytochrome P450 family. Heme is required as a cofactor.

The protein resides in the endoplasmic reticulum membrane. Its subcellular location is the microsome membrane. It catalyses the reaction triacontanoate + reduced [NADPH--hemoprotein reductase] + O2 = omega-hydroxy-triacontanoate + oxidized [NADPH--hemoprotein reductase] + H2O + H(+). It carries out the reaction an omega-methyl-ultra-long-chain fatty acid + reduced [NADPH--hemoprotein reductase] + O2 = an omega-hydroxy-ultra-long-chain fatty acid + oxidized [NADPH--hemoprotein reductase] + H2O + H(+). Functionally, a cytochrome P450 monooxygenase involved in epidermal ceramide biosynthesis. Hydroxylates the terminal carbon (omega-hydroxylation) of ultra-long-chain fatty acyls (C28-C36) prior to ceramide synthesis. Contributes to the synthesis of three classes of omega-hydroxy-ultra-long chain fatty acylceramides having sphingosine, 6-hydroxysphingosine and phytosphingosine bases, all major lipid components that underlie the permeability barrier of the stratum corneum. Mechanistically, uses molecular oxygen inserting one oxygen atom into a substrate, and reducing the second into a water molecule, with two electrons provided by NADPH via cytochrome P450 reductase (CPR; NADPH-ferrihemoprotein reductase). The chain is Ultra-long-chain fatty acid omega-hydroxylase from Homo sapiens (Human).